The sequence spans 359 residues: tRNA N6-adenosine threonylcarbamoyltransferase (359 aa).

Residues H115 and H119 each contribute to the Fe cation site. Substrate-binding positions include 137-141, D170, G183, and N283; that span reads LVSGG. Position 311 (D311) interacts with Fe cation. The disordered stretch occupies residues 328 to 359; that stretch reads APDSLDIAPRSRWPLDEKSAPVFGTGRRGAKA.

This sequence belongs to the KAE1 / TsaD family. The cofactor is Fe(2+).

The protein resides in the cytoplasm. The catalysed reaction is L-threonylcarbamoyladenylate + adenosine(37) in tRNA = N(6)-L-threonylcarbamoyladenosine(37) in tRNA + AMP + H(+). Functionally, required for the formation of a threonylcarbamoyl group on adenosine at position 37 (t(6)A37) in tRNAs that read codons beginning with adenine. Is involved in the transfer of the threonylcarbamoyl moiety of threonylcarbamoyl-AMP (TC-AMP) to the N6 group of A37, together with TsaE and TsaB. TsaD likely plays a direct catalytic role in this reaction. The polypeptide is tRNA N6-adenosine threonylcarbamoyltransferase (Brucella abortus (strain S19)).